Consider the following 418-residue polypeptide: Inhibitor of growth protein 3 (418 aa).

The disordered stretch occupies residues 127–165 (DTPSQPVNNHHAHSHTPVEKRKYNPTSHHTTTDHIPEKK). Residues Lys-148, Lys-165, and Lys-167 each participate in a glycyl lysine isopeptide (Lys-Gly) (interchain with G-Cter in SUMO2) cross-link. The span at 156-165 (TTTDHIPEKK) shows a compositional bias: basic and acidic residues. Lys-181 is modified (N6-acetyllysine). Residue Lys-256 forms a Glycyl lysine isopeptide (Lys-Gly) (interchain with G-Cter in SUMO2) linkage. Residue Lys-264 is modified to N6-acetyllysine. Positions 286–325 (TQNASSSAADSRSGRKSKNNNKSSSQQSSSSSSSSSLSSC) are disordered. Low complexity predominate over residues 305 to 325 (NNKSSSQQSSSSSSSSSLSSC). The PHD-type zinc finger occupies 360–409 (PRYCICNQVSYGEMVGCDNQDCPIEWFHYGCVGLTEAPKGKWYCPQCTAA). Zn(2+) is bound by residues Cys-363, Cys-365, Cys-376, Cys-381, His-387, Cys-390, Cys-403, and Cys-406.

It belongs to the ING family. Interacts with H3K4me3 and to a lesser extent with H3K4me2. Component of the NuA4 histone acetyltransferase complex which contains the catalytic subunit KAT5/TIP60 and the subunits EP400, TRRAP/PAF400, BRD8/SMAP, EPC1, DMAP1/DNMAP1, RUVBL1/TIP49, RUVBL2, ING3, actin, ACTL6A/BAF53A, MORF4L1/MRG15, MORF4L2/MRGX, MRGBP, YEATS4/GAS41, VPS72/YL1 and MEAF6. The NuA4 complex interacts with MYC and the adenovirus E1A protein. HTATTIP/TIP60, EPC1, and ING3 together constitute a minimal HAT complex termed Piccolo NuA4. Component of a SWR1-like complex. As to expression, expressed in brain, heart, kidney, liver, lung, ovaries, placenta, prostate, skeletal muscle, small intestine, spleen, testis and thymus.

It is found in the nucleus. Its function is as follows. Component of the NuA4 histone acetyltransferase (HAT) complex which is involved in transcriptional activation of select genes principally by acetylation of nucleosomal histones H4 and H2A. This modification may both alter nucleosome - DNA interactions and promote interaction of the modified histones with other proteins which positively regulate transcription. This complex may be required for the activation of transcriptional programs associated with oncogene and proto-oncogene mediated growth induction, tumor suppressor mediated growth arrest and replicative senescence, apoptosis, and DNA repair. NuA4 may also play a direct role in DNA repair when directly recruited to sites of DNA damage. Component of a SWR1-like complex that specifically mediates the removal of histone H2A.Z/H2AZ1 from the nucleosome. The chain is Inhibitor of growth protein 3 (ING3) from Homo sapiens (Human).